A 1058-amino-acid chain; its full sequence is Carbamoyl phosphate synthase large chain (1058 aa).

The tract at residues 1–401 (MPKRTDIQKI…SLLKACRSLE (401 aa)) is carboxyphosphate synthetic domain. ATP contacts are provided by Arg-129, Arg-169, Gly-175, Gly-176, Arg-208, Ile-210, Glu-215, Gly-241, Ile-242, His-243, Gln-284, and Glu-298. The region spanning 133–327 (KQLMEELEQP…IAKLAAKIAV (195 aa)) is the ATP-grasp 1 domain. Residues Gln-284, Glu-298, and Asn-300 each coordinate Mg(2+). 3 residues coordinate Mn(2+): Gln-284, Glu-298, and Asn-300. The tract at residues 402-546 (IGVHHNEIPE…YSTYGWENES (145 aa)) is oligomerization domain. Residues 547 to 929 (IRSDKESVLV…ALYKAFEASY (383 aa)) are carbamoyl phosphate synthetic domain. The region spanning 671 to 861 (EQALKELDIP…MAQVATKLIL (191 aa)) is the ATP-grasp 2 domain. Residues Arg-707, Ser-746, Ile-748, Glu-752, Gly-777, Val-778, His-779, Ser-780, Gln-820, and Glu-832 each coordinate ATP. 3 residues coordinate Mg(2+): Gln-820, Glu-832, and Asn-834. The Mn(2+) site is built by Gln-820, Glu-832, and Asn-834. The MGS-like domain occupies 930 to 1058 (LHLPTFGNVV…ESRSFVTEAI (129 aa)). Positions 930-1058 (LHLPTFGNVV…ESRSFVTEAI (129 aa)) are allosteric domain.

The protein belongs to the CarB family. Composed of two chains; the small (or glutamine) chain promotes the hydrolysis of glutamine to ammonia, which is used by the large (or ammonia) chain to synthesize carbamoyl phosphate. Tetramer of heterodimers (alpha,beta)4. Requires Mg(2+) as cofactor. The cofactor is Mn(2+).

The catalysed reaction is hydrogencarbonate + L-glutamine + 2 ATP + H2O = carbamoyl phosphate + L-glutamate + 2 ADP + phosphate + 2 H(+). The enzyme catalyses hydrogencarbonate + NH4(+) + 2 ATP = carbamoyl phosphate + 2 ADP + phosphate + 2 H(+). It functions in the pathway amino-acid biosynthesis; L-arginine biosynthesis; carbamoyl phosphate from bicarbonate: step 1/1. It participates in pyrimidine metabolism; UMP biosynthesis via de novo pathway; (S)-dihydroorotate from bicarbonate: step 1/3. Its function is as follows. Large subunit of the glutamine-dependent carbamoyl phosphate synthetase (CPSase). CPSase catalyzes the formation of carbamoyl phosphate from the ammonia moiety of glutamine, carbonate, and phosphate donated by ATP, constituting the first step of 2 biosynthetic pathways, one leading to arginine and/or urea and the other to pyrimidine nucleotides. The large subunit (synthetase) binds the substrates ammonia (free or transferred from glutamine from the small subunit), hydrogencarbonate and ATP and carries out an ATP-coupled ligase reaction, activating hydrogencarbonate by forming carboxy phosphate which reacts with ammonia to form carbamoyl phosphate. The polypeptide is Carbamoyl phosphate synthase large chain (Streptococcus pneumoniae serotype 2 (strain D39 / NCTC 7466)).